A 913-amino-acid chain; its full sequence is Rab GTPase-activating protein tbc-8 (913 aa).

Positions Met1 to Thr24 are disordered. The RUN domain maps to Asn106–Glu240. In terms of domain architecture, Rab-GAP TBC spans Ile597–Gln844.

It belongs to the RUTBC family. In terms of assembly, interacts with rab-19. Interacts with ric-19; the interaction is direct and may be required for the activation of rab-2 and dense vesicle maturation in cholinergic motoneurons. Interacts (via RUN domain) with rund-1. Does not interact with unc-108 (GTP-bound form). Expressed in neurons in the head, tail and ventral nerve cord (at protein level).

The protein resides in the golgi apparatus. It is found in the trans-Golgi network. Its subcellular location is the early endosome. It localises to the cytoplasmic vesicle membrane. Functionally, interacts with numerous Rab family members, functioning as Rab effector for some, and as GTPase activator for others. GTPase activator for rab-2. In association with ric-19 activates rab-2 during dense core vesicle maturation in cholinergic motoneurons. The sequence is that of Rab GTPase-activating protein tbc-8 from Caenorhabditis elegans.